A 104-amino-acid chain; its full sequence is Transcription factor S (104 aa).

Residues C4, C7, C20, C22, C65, C68, C93, and C96 each contribute to the Zn(2+) site. Residues 4–22 (CPKCGAVMFPSEGKFKCQC) form a C4-type zinc finger. Residues 61–101 (TRVECPKCGNMEAFWWLQQTRRADESETRFFRCTRCKHTWR) form a TFIIS-type zinc finger.

It belongs to the archaeal RpoM/eukaryotic RPA12/RPB9/RPC11 RNA polymerase family.

Its function is as follows. Induces RNA cleavage activity in the RNA polymerase. In its presence, the cleavage activity of the RNA polymerase truncates the RNA back to position +15 in a stepwise manner by releasing mainly dinucleotides from the 3'-end of the nascent RNA. The truncated RNAs are able to continue elongation. Involved in transcriptional proofreading and fidelity. Misincorporation of nucleotides during elongation of transcription leads to arrested elongation complexes which are rescued by TFS-promoted removal of a dinucleotide from the 3'-end. TFS is able to induce a cleavage resynthesis cycle in stalled elongation complexes (resulting from the next missing nucleotide or a reduced incorporation rate of a wrong nucleotide) preventing misincorporation and enabling proofreading in a post-incorporation manner. Pausing of elongation complexes is the main determinant of TFS-induced RNA cleavage. This chain is Transcription factor S, found in Methanothermobacter thermautotrophicus (strain ATCC 29096 / DSM 1053 / JCM 10044 / NBRC 100330 / Delta H) (Methanobacterium thermoautotrophicum).